Reading from the N-terminus, the 210-residue chain is Homeobox protein Rhox5 (210 aa).

Residues lysine 29–methionine 117 form a disordered region. Residues methionine 117–arginine 175 constitute a DNA-binding region (homeobox; atypical).

The protein localises to the nucleus. In terms of biological role, transcription factor required for differentiation of embryonic stem cells (ESCs) into primordial germ cells. In Mus minutoides (Southern African pygmy mouse), this protein is Homeobox protein Rhox5 (Rhox5).